We begin with the raw amino-acid sequence, 392 residues long: Multidrug resistance protein MdtL (392 aa).

Helical transmembrane passes span Phe-4–Val-24, Ala-38–Ala-58, Val-70–Ala-90, Leu-95–Ile-115, Leu-131–Met-151, Ser-158–Leu-178, Ile-209–Leu-229, Ala-246–Phe-266, Thr-270–Thr-290, Leu-294–Met-314, Val-331–Gly-351, and Met-357–Thr-377.

It belongs to the major facilitator superfamily. DHA1 family. MdtL (TC 2.A.1.2.22) subfamily.

The protein localises to the cell inner membrane. The protein is Multidrug resistance protein MdtL of Klebsiella pneumoniae (strain 342).